A 349-amino-acid polypeptide reads, in one-letter code: Short-wave-sensitive opsin 1 (349 aa).

The Extracellular segment spans residues 1-34 (MSKMSEEEEFLLFKNISLVGPWDGPQYHLAPVWA). An N-linked (GlcNAc...) asparagine glycan is attached at Asn15. Residues 35-59 (FHLQAVFMGFVFFVGTPLNATVLVA) form a helical membrane-spanning segment. The Cytoplasmic segment spans residues 60-71 (TLRYRKLRQPLN). Residues 72-97 (YILVNVSLGGFIYCIFSVFIVFITSC) traverse the membrane as a helical segment. At 98–111 (YGYFVFGRHVCALE) the chain is on the extracellular side. Cys108 and Cys185 are disulfide-bonded. The chain crosses the membrane as a helical span at residues 112–131 (AFLGCTAGLVTGWSLAFLAF). Residues 132–150 (ERYIIICKPFGNFRFSSKH) are Cytoplasmic-facing. The helical transmembrane segment at 151–174 (ALMVVVATWTIGIGVSIPPFFGWS) threads the bilayer. The Extracellular segment spans residues 175–200 (RFVPEGLQCSCGPDWYTVGTKYYSEY). A helical transmembrane segment spans residues 201–228 (YTWFLFIFCYIVPLSLICFSYSQLLGAL). At 229-250 (RAVAAQQQESASTQKAEREVSH) the chain is on the cytoplasmic side. A helical transmembrane segment spans residues 251-274 (MVVVMVGSFCLCYTPYAALAMYIV). The Extracellular portion of the chain corresponds to 275–282 (NNRNHGVD). A helical transmembrane segment spans residues 283-307 (LRLVTIPAFFSKSACVYNPIIYCFM). At Lys294 the chain carries N6-(retinylidene)lysine. Topologically, residues 308-349 (NKQFRACIMEMVCGKPMTDESELSSSQKTEVSTVSSSQVGPN) are cytoplasmic. Positions 327-349 (ESELSSSQKTEVSTVSSSQVGPN) are disordered. Positions 330–349 (LSSSQKTEVSTVSSSQVGPN) are enriched in polar residues.

This sequence belongs to the G-protein coupled receptor 1 family. Opsin subfamily. Post-translationally, phosphorylated on some or all of the serine and threonine residues present in the C-terminal region.

The protein localises to the cell membrane. The protein resides in the photoreceptor inner segment. It localises to the cell projection. Its subcellular location is the cilium. It is found in the photoreceptor outer segment. The protein localises to the cytoplasm. The protein resides in the perinuclear region. In terms of biological role, visual pigments are the light-absorbing molecules that mediate vision. They consist of an apoprotein, opsin, covalently linked to cis-retinal. Required for the maintenance of cone outer segment organization in the ventral retina, but not essential for the maintenance of functioning cone photoreceptors. Involved in ensuring correct abundance and localization of retinal membrane proteins. May increase spectral sensitivity in dim light. In Bos taurus (Bovine), this protein is Short-wave-sensitive opsin 1 (OPN1SW).